Here is a 56-residue protein sequence, read N- to C-terminus: Protein hunchback (56 aa).

3 consecutive C2H2-type zinc fingers follow at residues 1–5, 11–33, and 39–56; these read HVRNH, HKCG…MKSH, and YRCA…SLKL.

It belongs to the hunchback C2H2-type zinc-finger protein family.

Its subcellular location is the nucleus. Gap class segmentation protein that controls development of head structures. This is Protein hunchback (hb) from Bithynia tentaculata (Spire snail).